The sequence spans 89 residues: Small ribosomal subunit protein bS20 (89 aa).

The span at 1–12 (MANHKSAIKRHR) shows a compositional bias: basic residues. Residues 1–26 (MANHKSAIKRHRQSVERAGRNRAART) form a disordered region.

The protein belongs to the bacterial ribosomal protein bS20 family.

In terms of biological role, binds directly to 16S ribosomal RNA. This is Small ribosomal subunit protein bS20 from Desulfovibrio desulfuricans (strain ATCC 27774 / DSM 6949 / MB).